The following is a 213-amino-acid chain: Leucyl/phenylalanyl-tRNA--protein transferase (213 aa).

Belongs to the L/F-transferase family.

The protein resides in the cytoplasm. The enzyme catalyses N-terminal L-lysyl-[protein] + L-leucyl-tRNA(Leu) = N-terminal L-leucyl-L-lysyl-[protein] + tRNA(Leu) + H(+). The catalysed reaction is N-terminal L-arginyl-[protein] + L-leucyl-tRNA(Leu) = N-terminal L-leucyl-L-arginyl-[protein] + tRNA(Leu) + H(+). It carries out the reaction L-phenylalanyl-tRNA(Phe) + an N-terminal L-alpha-aminoacyl-[protein] = an N-terminal L-phenylalanyl-L-alpha-aminoacyl-[protein] + tRNA(Phe). Its function is as follows. Functions in the N-end rule pathway of protein degradation where it conjugates Leu, Phe and, less efficiently, Met from aminoacyl-tRNAs to the N-termini of proteins containing an N-terminal arginine or lysine. The polypeptide is Leucyl/phenylalanyl-tRNA--protein transferase (Campylobacter lari (strain RM2100 / D67 / ATCC BAA-1060)).